The chain runs to 197 residues: Dephospho-CoA kinase (197 aa).

Residues 2–197 (RIGLTGGIAS…YDALAKTAHE (196 aa)) form the DPCK domain. 10 to 15 (ASGKSL) is an ATP binding site.

Belongs to the CoaE family.

It localises to the cytoplasm. The catalysed reaction is 3'-dephospho-CoA + ATP = ADP + CoA + H(+). It participates in cofactor biosynthesis; coenzyme A biosynthesis; CoA from (R)-pantothenate: step 5/5. Functionally, catalyzes the phosphorylation of the 3'-hydroxyl group of dephosphocoenzyme A to form coenzyme A. This chain is Dephospho-CoA kinase, found in Shouchella clausii (strain KSM-K16) (Alkalihalobacillus clausii).